We begin with the raw amino-acid sequence, 253 residues long: Low affinity immunoglobulin gamma Fc region receptor III-B (253 aa).

The first 20 residues, 1–20 (MGQPLPPVALLLLVSASSRA), serve as a signal peptide directing secretion. Residues 21–207 (ADVPKALVLL…VSSSVLPWHQ (187 aa)) lie on the Extracellular side of the membrane. Ig-like C2-type domains are found at residues 24–105 (PKAL…LRVH) and 120–189 (EGEP…VTIT). Cystine bridges form between Cys47–Cys89 and Cys128–Cys172. N-linked (GlcNAc...) asparagine glycans are attached at residues Asn56, Asn63, Asn165, and Asn180. The chain crosses the membrane as a helical span at residues 208 to 226 (IAFCLVMGLLLAADTGLYF). Over 227–253 (SVQRDLRSSQRARKEHTLGWSLGSQDK) the chain is Cytoplasmic.

In terms of assembly, forms a heterooligomeric complex with ITAM-containing signaling subunits FCER1G. Interacts (via transmembrane domain) with signaling subunits; this interaction is a prerequisite for receptor complex expression on the cell surface and intracellular signal transduction. Binds the Fc region of antigen-complexed IgG.

The protein localises to the cell membrane. Functionally, receptor for the invariable Fc fragment of immunoglobulin gamma (IgG). Optimally activated upon binding of clustered antigen-IgG complexes displayed on cell surfaces, triggers lysis of antibody-coated cells, a process known as antibody-dependent cellular cytotoxicity (ADCC). Does not bind free monomeric IgG, thus avoiding inappropriate effector cell activation in the absence of antigenic trigger. Mediates IgG effector functions on natural killer (NK) cells. Binds antigen-IgG complexes generated upon infection and triggers NK cell-dependent cytokine production and degranulation to limit viral load and propagation. Fc-binding subunit that associates with FCER1G adapters to form functional signaling complexes. Following the engagement of antigen-IgG complexes, triggers phosphorylation of immunoreceptor tyrosine-based activation motif (ITAM)-containing adapters with subsequent activation of phosphatidylinositol 3-kinase signaling and sustained elevation of intracellular calcium that ultimately drive NK cell activation. Mediates enhanced ADCC in response to afucosylated IgGs. This is Low affinity immunoglobulin gamma Fc region receptor III-B (FCGR3B) from Oryctolagus cuniculus (Rabbit).